The primary structure comprises 96 residues: Uteroglobin (96 aa).

The N-terminal stretch at 1-21 (MKIAITMAVVMLSVCCSSASS) is a signal peptide.

This sequence belongs to the secretoglobin family. Antiparallel homodimer; disulfide-linked. Interaction with LMBR1L is controversial.

The protein localises to the secreted. Binds phosphatidylcholine, phosphatidylinositol, polychlorinated biphenyls (PCB) and weakly progesterone, potent inhibitor of phospholipase A2. The chain is Uteroglobin (SCGB1A1) from Mesocricetus auratus (Golden hamster).